The sequence spans 207 residues: Thymidylate kinase (207 aa).

Residue 7–14 coordinates ATP; the sequence is GCEGSGKS.

The protein belongs to the thymidylate kinase family.

The enzyme catalyses dTMP + ATP = dTDP + ADP. Functionally, phosphorylation of dTMP to form dTDP in both de novo and salvage pathways of dTTP synthesis. This Chlamydia caviae (strain ATCC VR-813 / DSM 19441 / 03DC25 / GPIC) (Chlamydophila caviae) protein is Thymidylate kinase.